A 310-amino-acid polypeptide reads, in one-letter code: N-acetyl-gamma-glutamyl-phosphate reductase (310 aa).

Residue Cys-117 is part of the active site.

This sequence belongs to the NAGSA dehydrogenase family. Type 2 subfamily.

It is found in the cytoplasm. The catalysed reaction is N-acetyl-L-glutamate 5-semialdehyde + phosphate + NADP(+) = N-acetyl-L-glutamyl 5-phosphate + NADPH + H(+). It functions in the pathway amino-acid biosynthesis; L-arginine biosynthesis; N(2)-acetyl-L-ornithine from L-glutamate: step 3/4. In terms of biological role, catalyzes the NADPH-dependent reduction of N-acetyl-5-glutamyl phosphate to yield N-acetyl-L-glutamate 5-semialdehyde. This chain is N-acetyl-gamma-glutamyl-phosphate reductase, found in Allorhizobium ampelinum (strain ATCC BAA-846 / DSM 112012 / S4) (Agrobacterium vitis (strain S4)).